The sequence spans 232 residues: Phosphoribosylformylglycinamidine synthase subunit PurQ (232 aa).

The region spanning 2–232 (RIGVITFPGS…SVVRSTLVEA (231 aa)) is the Glutamine amidotransferase type-1 domain. Cysteine 85 acts as the Nucleophile in catalysis. Residues histidine 194 and glutamate 196 contribute to the active site.

As to quaternary structure, part of the FGAM synthase complex composed of 1 PurL, 1 PurQ and 2 PurS subunits.

The protein resides in the cytoplasm. The enzyme catalyses N(2)-formyl-N(1)-(5-phospho-beta-D-ribosyl)glycinamide + L-glutamine + ATP + H2O = 2-formamido-N(1)-(5-O-phospho-beta-D-ribosyl)acetamidine + L-glutamate + ADP + phosphate + H(+). It carries out the reaction L-glutamine + H2O = L-glutamate + NH4(+). It functions in the pathway purine metabolism; IMP biosynthesis via de novo pathway; 5-amino-1-(5-phospho-D-ribosyl)imidazole from N(2)-formyl-N(1)-(5-phospho-D-ribosyl)glycinamide: step 1/2. In terms of biological role, part of the phosphoribosylformylglycinamidine synthase complex involved in the purines biosynthetic pathway. Catalyzes the ATP-dependent conversion of formylglycinamide ribonucleotide (FGAR) and glutamine to yield formylglycinamidine ribonucleotide (FGAM) and glutamate. The FGAM synthase complex is composed of three subunits. PurQ produces an ammonia molecule by converting glutamine to glutamate. PurL transfers the ammonia molecule to FGAR to form FGAM in an ATP-dependent manner. PurS interacts with PurQ and PurL and is thought to assist in the transfer of the ammonia molecule from PurQ to PurL. In Leifsonia xyli subsp. xyli (strain CTCB07), this protein is Phosphoribosylformylglycinamidine synthase subunit PurQ.